The chain runs to 245 residues: 8-amino-3,8-dideoxy-manno-octulosonate cytidylyltransferase (245 aa).

It belongs to the KdsB family.

The protein localises to the cytoplasm. It carries out the reaction 8-amino-3,8-dideoxy-alpha-D-manno-octulosonate + CTP = CMP-8-amino-3,8-dideoxy-alpha-D-manno-oct-2-ulosonate + diphosphate. It functions in the pathway bacterial outer membrane biogenesis; lipopolysaccharide biosynthesis. Functionally, activates KDO8N (a required 8-carbon sugar) for incorporation into bacterial lipopolysaccharide in the Shewanella genus. This is 8-amino-3,8-dideoxy-manno-octulosonate cytidylyltransferase from Shewanella sp. (strain MR-7).